Reading from the N-terminus, the 92-residue chain is Alpha-elapitoxin-Lh2a (92 aa).

An N-terminal signal peptide occupies residues 1-21 (MKTLLLTLVVVTIVCLDLGDS). 5 disulfide bridges follow: Cys-24–Cys-41, Cys-34–Cys-62, Cys-47–Cys-51, Cys-66–Cys-77, and Cys-78–Cys-83.

This sequence belongs to the three-finger toxin family. Long-chain subfamily. Type II alpha-neurotoxin sub-subfamily. In terms of tissue distribution, expressed by the venom gland.

It is found in the secreted. In terms of biological role, binds with high affinity to muscular (alpha-1/CHRNA1) and neuronal (alpha-7/CHRNA7) nicotinic acetylcholine receptor (nAChR) and inhibits acetylcholine from binding to the receptor, thereby impairing neuromuscular and neuronal transmission. The sequence is that of Alpha-elapitoxin-Lh2a from Hydrophis hardwickii (Hardwick's spine-bellied seasnake).